Reading from the N-terminus, the 931-residue chain is Protein translocase subunit SecA (931 aa).

ATP contacts are provided by residues glutamine 87, 105-109 (GEGKT), and aspartate 515. Cysteine 915, cysteine 917, cysteine 926, and histidine 927 together coordinate Zn(2+).

It belongs to the SecA family. In terms of assembly, monomer and homodimer. Part of the essential Sec protein translocation apparatus which comprises SecA, SecYEG and auxiliary proteins SecDF-YajC and YidC. Zn(2+) is required as a cofactor.

It localises to the cell inner membrane. The protein localises to the cytoplasm. It carries out the reaction ATP + H2O + cellular proteinSide 1 = ADP + phosphate + cellular proteinSide 2.. In terms of biological role, part of the Sec protein translocase complex. Interacts with the SecYEG preprotein conducting channel. Has a central role in coupling the hydrolysis of ATP to the transfer of proteins into and across the cell membrane, serving both as a receptor for the preprotein-SecB complex and as an ATP-driven molecular motor driving the stepwise translocation of polypeptide chains across the membrane. The protein is Protein translocase subunit SecA of Burkholderia ambifaria (strain MC40-6).